The following is a 431-amino-acid chain: MPSQMREAITRLNEEFGCRIFVISLGDKKRVFDGGKVGTWAATLDELARERNVVIIVSAGNRGPRAGSRVEQGVTEYPDYLLEANNRLLEPAGAMNVITVGSIAQGDGLDADMAGDVRVRPITRANEPSPFSRVGPGLGGGTKPDLVDVGGTLIFDPVVARLRGGEDRPSAGVLTLNHNYLNRLFTAGSGTSYSAPRVGFSAGQILARFPGASANLVRALLINSAEVPQQASERLQILGSEAVRSVCGHGLIDLERAGFSDDARVTLYTEDELPLDHFAVYRIPIPEVFQEGNTERTIRVTLAYDPPVRHTRNDYAGVGMSFRLVRGCEPNFIFEHYRKRAEVEGPFPEMENRFNCKLEPGPKVREKSSVQRASITFKRGIEQYGDSYYLVVRCESGWATHVDRQPFAVVVELLQKAEVRLYERLRQRVRA.

The Peptidase S8 domain maps to 1 to 258 (MPSQMREAIT…HGLIDLERAG (258 aa)).

Belongs to the peptidase S8 family.

This is an uncharacterized protein from Sinorhizobium fredii (strain NBRC 101917 / NGR234).